A 1028-amino-acid chain; its full sequence is Pro-apoptotic serine protease nma111 (1028 aa).

Residues Met-1–Val-46 form a disordered region. The tract at residues Val-82 to Asp-266 is serine protease. Catalysis depends on charge relay system residues His-120, Asp-151, and Ser-233. 2 PDZ domains span residues Pro-305–Gly-377 and Val-876–Asp-957. Residues Thr-989–Asp-1028 are disordered. Residues Val-990–Ile-1001 show a composition bias toward basic and acidic residues. The segment covering Ala-1012–Asp-1028 has biased composition (acidic residues).

The protein belongs to the peptidase S1C family.

The protein resides in the nucleus. Nuclear serine protease which mediates apoptosis. In Neosartorya fischeri (strain ATCC 1020 / DSM 3700 / CBS 544.65 / FGSC A1164 / JCM 1740 / NRRL 181 / WB 181) (Aspergillus fischerianus), this protein is Pro-apoptotic serine protease nma111 (nma111).